Here is a 431-residue protein sequence, read N- to C-terminus: 3-phosphoshikimate 1-carboxyvinyltransferase (431 aa).

The 3-phosphoshikimate site is built by lysine 21, serine 22, and arginine 26. A phosphoenolpyruvate-binding site is contributed by lysine 21. Phosphoenolpyruvate is bound by residues glycine 93 and arginine 122. Residues serine 167, glutamine 169, aspartate 318, and lysine 345 each coordinate 3-phosphoshikimate. Glutamine 169 is a binding site for phosphoenolpyruvate. The active-site Proton acceptor is the aspartate 318. Residues arginine 349 and arginine 391 each coordinate phosphoenolpyruvate.

This sequence belongs to the EPSP synthase family. Monomer.

The protein localises to the cytoplasm. The catalysed reaction is 3-phosphoshikimate + phosphoenolpyruvate = 5-O-(1-carboxyvinyl)-3-phosphoshikimate + phosphate. It functions in the pathway metabolic intermediate biosynthesis; chorismate biosynthesis; chorismate from D-erythrose 4-phosphate and phosphoenolpyruvate: step 6/7. Functionally, catalyzes the transfer of the enolpyruvyl moiety of phosphoenolpyruvate (PEP) to the 5-hydroxyl of shikimate-3-phosphate (S3P) to produce enolpyruvyl shikimate-3-phosphate and inorganic phosphate. In Roseiflexus castenholzii (strain DSM 13941 / HLO8), this protein is 3-phosphoshikimate 1-carboxyvinyltransferase.